Consider the following 632-residue polypeptide: MTGWSGLFIEVPLYRLASKVCCHLRGPQGFLQRACQGVCCLPRDSRAAGIMEEKRKSFISQILILGEVLCMVDVSMSIKCGILFLLFGGAISNLGSPEHVTKWFWPLKEQKYTGMFAMTERGHGSNVRGIQTEATFDLDNQEFVIDMPCENAHKMYIGNAMHGNYAAVFAQLIIEGKSQGPHCFIVPIRDENGNLYPGVTAIDMMHKEGMNGVDNGILIFDKVRIPRENLLDKFGSVTPDGQYHSPIQSKNARFNAILATLTPSRLAVTFQALGAMKLGLMIAIRYSHSRRQFGPKDKEEVKIIEHQMQALRLMSHLATALAVTFTSRHADDILDEDIFQGRALTNSRSLQALMAGLKAYSTWETVSCLQDCRECTGGMGYMMETRISDLKCDTDVFVTFEGDNVVMLQVVARELLAQYSKQHKKNLLLGVIQNWTATAGDKLRTSFLAFNTDTVGCLAFLLKAVNFRERVLQRSLVSRIYYKVVTKKGDFFSAWNSCMHHVTSLSLAHIHRVALEQFTTAVRQCPNREDQALLMKFCLLYGTKLVFQERGWYLEHKYLTPKASMLIRAQLLNLCESVKDDALKVISAFNIPHITIRAPKTGIPNPGAAEAAYPAPMQPLVRDAARAQLAKL.

376–381 (TGGMGY) contacts FAD.

Belongs to the acyl-CoA oxidase family. Requires FAD as cofactor.

This Mus musculus (Mouse) protein is Acyl-coenzyme A oxidase-like protein (Acoxl).